Reading from the N-terminus, the 80-residue chain is Defensin-like protein 291 (80 aa).

The first 29 residues, 1 to 29 (MAASKTTIFIVFVLCLSCTLLVNISGIQA), serve as a signal peptide directing secretion. Cystine bridges form between cysteine 50/cysteine 70, cysteine 56/cysteine 75, and cysteine 62/cysteine 77.

The protein belongs to the DEFL family.

Its subcellular location is the secreted. The sequence is that of Defensin-like protein 291 from Arabidopsis thaliana (Mouse-ear cress).